Consider the following 223-residue polypeptide: MFKPKAIAVDIDGTLTDRKRALNCRAVEALRKVKIPVILATGNISCFARAAAKLIGVSDVVICENGGVVRFEYDGEDIVLGDKEKCVEAVRVLEKHYEVELLDFEYRKSEVCMRRSFDINEARKLIEGMGVKLVDSGFAYHIMDADVSKGKALKFVAERLGISSAEFAVIGDSENDIDMFRVAGFGIAVANADERLKEYADLVTPSPDGEGVVEALQFLGLLR.

The active-site Nucleophile is D10. Residues D10 and D12 each coordinate Mg(2+). K149 contributes to the substrate binding site. Residues D172 and D176 each contribute to the Mg(2+) site.

This sequence belongs to the archaeal SPP-like hydrolase family. It depends on Mg(2+) as a cofactor.

The enzyme catalyses 2-phosphoglycolate + H2O = glycolate + phosphate. Functionally, catalyzes the dephosphorylation of 2-phosphoglycolate. The polypeptide is Phosphoglycolate phosphatase (Archaeoglobus fulgidus (strain ATCC 49558 / DSM 4304 / JCM 9628 / NBRC 100126 / VC-16)).